The chain runs to 488 residues: Glutamyl-tRNA(Gln) amidotransferase subunit A (488 aa).

Active-site charge relay system residues include Lys76 and Ser152. Ser176 functions as the Acyl-ester intermediate in the catalytic mechanism.

This sequence belongs to the amidase family. GatA subfamily. Heterotrimer of A, B and C subunits.

It carries out the reaction L-glutamyl-tRNA(Gln) + L-glutamine + ATP + H2O = L-glutaminyl-tRNA(Gln) + L-glutamate + ADP + phosphate + H(+). Allows the formation of correctly charged Gln-tRNA(Gln) through the transamidation of misacylated Glu-tRNA(Gln) in organisms which lack glutaminyl-tRNA synthetase. The reaction takes place in the presence of glutamine and ATP through an activated gamma-phospho-Glu-tRNA(Gln). This chain is Glutamyl-tRNA(Gln) amidotransferase subunit A, found in Oceanobacillus iheyensis (strain DSM 14371 / CIP 107618 / JCM 11309 / KCTC 3954 / HTE831).